The primary structure comprises 734 residues: Diacylglycerol kinase alpha (734 aa).

EF-hand domains are found at residues 109–144 (RPEDKLEFTFKLYDTDRNGILDSSEVDRIIIQMMRM) and 154–189 (ELRPILQEMMKEIDYDGSGSVSLAEWLRAGATTVPL). Ca(2+) is bound by residues Asp-122, Asp-124, Asn-126, Glu-133, Asp-167, Asp-169, Ser-171, Ser-173, and Glu-178. Phorbol-ester/DAG-type zinc fingers lie at residues 204-252 (QHMW…ALPC) and 268-318 (SHVW…GHEC). The DAGKc domain maps to 371-505 (SNTHPLLVFV…MDRWSVEVIP (135 aa)). N6-acetyllysine is present on Lys-483.

Belongs to the eukaryotic diacylglycerol kinase family. Monomer.

It localises to the cytoplasm. The protein resides in the cytosol. The enzyme catalyses a 1,2-diacyl-sn-glycerol + ATP = a 1,2-diacyl-sn-glycero-3-phosphate + ADP + H(+). It catalyses the reaction a 1-O-alkyl-sn-glycerol + ATP = a 1-O-alkyl-sn-glycero-3-phosphate + ADP + H(+). It carries out the reaction 1-O-alkyl-2-acyl-sn-glycerol + ATP = 1-O-alkyl-2-acyl-sn-glycero-3-phosphate + ADP + H(+). The catalysed reaction is 1,2-dihexadecanoyl-sn-glycerol + ATP = 1,2-dihexadecanoyl-sn-glycero-3-phosphate + ADP + H(+). The enzyme catalyses 1-hexadecanoyl-2-(9Z-octadecenoyl)-sn-glycerol + ATP = 1-hexadecanoyl-2-(9Z-octadecenoyl)-sn-glycero-3-phosphate + ADP + H(+). It catalyses the reaction 2-(9Z-octadecenoyl)-glycerol + ATP = 2-(9Z-octadecenoyl)-sn-glycero-3-phosphate + ADP + H(+). It carries out the reaction 1,2-di-(9Z-octadecenoyl)-sn-glycerol + ATP = 1,2-di-(9Z-octadecenoyl)-sn-glycero-3-phosphate + ADP + H(+). The catalysed reaction is 1-octadecanoyl-2-(5Z,8Z,11Z,14Z-eicosatetraenoyl)-sn-glycerol + ATP = 1-octadecanoyl-2-(5Z,8Z,11Z,14Z-eicosatetraenoyl)-sn-glycero-3-phosphate + ADP + H(+). The enzyme catalyses 1,2-didecanoyl-sn-glycerol + ATP = 1,2-didecanoyl-sn-glycero-3-phosphate + ADP + H(+). It catalyses the reaction 1-O-hexadecyl-2-acetyl-sn-glycerol + ATP = 1-O-hexadecyl-2-acetyl-sn-glycero-3-phosphate + ADP + H(+). It carries out the reaction 1-O-hexadecyl-2-(5Z,8Z,11Z,14Z-eicosatetraenoyl)-sn-glycerol + ATP = 1-O-hexadecyl-2-(5Z,8Z,11Z,14Z-eicosatetraenoyl)-sn-glycero-3-phosphate + ADP + H(+). The catalysed reaction is 1-O-hexadecyl-2-(9Z-octadecenoyl)-sn-glycerol + ATP = 1-O-hexadecyl-2-(9Z-octadecenoyl)-sn-glycero-3-phosphate + ADP + H(+). The enzyme catalyses 1-O-hexadecyl-sn-glycerol + ATP = 1-O-hexadecyl-sn-glycero-3-phosphate + ADP + H(+). The protein operates within lipid metabolism; glycerolipid metabolism. Its activity is regulated as follows. Stimulated by calcium and phosphatidylserine. In terms of biological role, diacylglycerol kinase that converts diacylglycerol/DAG into phosphatidic acid/phosphatidate/PA and regulates the respective levels of these two bioactive lipids. Thereby, acts as a central switch between the signaling pathways activated by these second messengers with different cellular targets and opposite effects in numerous biological processes. Also plays an important role in the biosynthesis of complex lipids. Can also phosphorylate 1-alkyl-2-acylglycerol in vitro as efficiently as diacylglycerol provided it contains an arachidonoyl group. Also involved in the production of alkyl-lysophosphatidic acid, another bioactive lipid, through the phosphorylation of 1-alkyl-2-acetyl glycerol. The chain is Diacylglycerol kinase alpha (DGKA) from Bos taurus (Bovine).